The sequence spans 126 residues: Large ribosomal subunit protein bL12 (126 aa).

The protein belongs to the bacterial ribosomal protein bL12 family. In terms of assembly, homodimer. Part of the ribosomal stalk of the 50S ribosomal subunit. Forms a multimeric L10(L12)X complex, where L10 forms an elongated spine to which 2 to 4 L12 dimers bind in a sequential fashion. Binds GTP-bound translation factors.

Its function is as follows. Forms part of the ribosomal stalk which helps the ribosome interact with GTP-bound translation factors. Is thus essential for accurate translation. The protein is Large ribosomal subunit protein bL12 of Methylorubrum populi (strain ATCC BAA-705 / NCIMB 13946 / BJ001) (Methylobacterium populi).